A 348-amino-acid polypeptide reads, in one-letter code: D-erythrose-4-phosphate dehydrogenase (348 aa).

NAD(+) contacts are provided by residues 12–13 and Arg-81; that span reads RI. Substrate is bound by residues 154 to 156, Arg-200, 213 to 214, and Arg-236; these read SCT and TK. The Nucleophile role is filled by Cys-155. NAD(+) is bound at residue Asn-318.

The protein belongs to the glyceraldehyde-3-phosphate dehydrogenase family. Epd subfamily. In terms of assembly, homotetramer.

It localises to the cytoplasm. The enzyme catalyses D-erythrose 4-phosphate + NAD(+) + H2O = 4-phospho-D-erythronate + NADH + 2 H(+). Its pathway is cofactor biosynthesis; pyridoxine 5'-phosphate biosynthesis; pyridoxine 5'-phosphate from D-erythrose 4-phosphate: step 1/5. In terms of biological role, catalyzes the NAD-dependent conversion of D-erythrose 4-phosphate to 4-phosphoerythronate. The protein is D-erythrose-4-phosphate dehydrogenase of Salmonella dublin (strain CT_02021853).